A 469-amino-acid chain; its full sequence is Cysteine--tRNA ligase (469 aa).

Cysteine 33 provides a ligand contact to Zn(2+). Residues 35–45 carry the 'HIGH' region motif; the sequence is ATVQGLPHIGH. Positions 211, 236, and 240 each coordinate Zn(2+). The 'KMSKS' region motif lies at 267-271; that stretch reads KMSKS. Lysine 270 provides a ligand contact to ATP.

This sequence belongs to the class-I aminoacyl-tRNA synthetase family. Monomer. It depends on Zn(2+) as a cofactor.

It is found in the cytoplasm. The enzyme catalyses tRNA(Cys) + L-cysteine + ATP = L-cysteinyl-tRNA(Cys) + AMP + diphosphate. This is Cysteine--tRNA ligase (cysS) from Mycobacterium tuberculosis (strain CDC 1551 / Oshkosh).